The following is a 241-amino-acid chain: Biosynthetic peptidoglycan transglycosylase (241 aa).

Residues 18 to 38 (GVIGIIALWMAGILIFAFLPV) traverse the membrane as a helical segment.

This sequence belongs to the glycosyltransferase 51 family.

The protein localises to the cell inner membrane. The catalysed reaction is [GlcNAc-(1-&gt;4)-Mur2Ac(oyl-L-Ala-gamma-D-Glu-L-Lys-D-Ala-D-Ala)](n)-di-trans,octa-cis-undecaprenyl diphosphate + beta-D-GlcNAc-(1-&gt;4)-Mur2Ac(oyl-L-Ala-gamma-D-Glu-L-Lys-D-Ala-D-Ala)-di-trans,octa-cis-undecaprenyl diphosphate = [GlcNAc-(1-&gt;4)-Mur2Ac(oyl-L-Ala-gamma-D-Glu-L-Lys-D-Ala-D-Ala)](n+1)-di-trans,octa-cis-undecaprenyl diphosphate + di-trans,octa-cis-undecaprenyl diphosphate + H(+). It participates in cell wall biogenesis; peptidoglycan biosynthesis. Peptidoglycan polymerase that catalyzes glycan chain elongation from lipid-linked precursors. The chain is Biosynthetic peptidoglycan transglycosylase from Yersinia pseudotuberculosis serotype O:1b (strain IP 31758).